The chain runs to 293 residues: MTFNEGVQIDTSTTSTSGSGGGRRLAIGGGLGGLLVVVVAMLLGVDPGGVLSQQPLDTRDHVAPGFDLSQCRTGADANRFVQCRVVATGNSVDAVWKPLLPGYTRPHMRLFSGQVGTGCGPASSEVGPFYCPVDKTAYFDTDFFQVLVTQFGSSGGPFAEEYVVAHEYGHHVQNLLGVLGRAQQGAQGAAGSGVRTELQADCYAGVWAYYASTVKQESTGVPYLEPLSDKDIQDALAAAAAVGDDRIQQQTTGRTNPETWTHGSAAQRQKWFTVGYQTGDPNICDTFSAADLG.

The tract at residues 1–22 (MTFNEGVQIDTSTTSTSGSGGG) is disordered. A helical membrane pass occupies residues 25 to 45 (LAIGGGLGGLLVVVVAMLLGV). Residues 243-265 (GDDRIQQQTTGRTNPETWTHGSA) form a disordered region. A compositionally biased stretch (polar residues) spans 248 to 265 (QQQTTGRTNPETWTHGSA).

It localises to the membrane. This is an uncharacterized protein from Mycobacterium tuberculosis (strain CDC 1551 / Oshkosh).